The sequence spans 341 residues: Glycerol-3-phosphate dehydrogenase [NAD(P)+] (341 aa).

Positions 12, 13, 33, and 107 each coordinate NADPH. 3 residues coordinate sn-glycerol 3-phosphate: K107, G134, and T136. A138 contributes to the NADPH binding site. K189, D242, S252, R253, and N254 together coordinate sn-glycerol 3-phosphate. K189 functions as the Proton acceptor in the catalytic mechanism. Residue R253 coordinates NADPH. Residues V277 and E279 each contribute to the NADPH site.

It belongs to the NAD-dependent glycerol-3-phosphate dehydrogenase family.

It localises to the cytoplasm. It catalyses the reaction sn-glycerol 3-phosphate + NAD(+) = dihydroxyacetone phosphate + NADH + H(+). The catalysed reaction is sn-glycerol 3-phosphate + NADP(+) = dihydroxyacetone phosphate + NADPH + H(+). It functions in the pathway membrane lipid metabolism; glycerophospholipid metabolism. Functionally, catalyzes the reduction of the glycolytic intermediate dihydroxyacetone phosphate (DHAP) to sn-glycerol 3-phosphate (G3P), the key precursor for phospholipid synthesis. In Halothermothrix orenii (strain H 168 / OCM 544 / DSM 9562), this protein is Glycerol-3-phosphate dehydrogenase [NAD(P)+].